The chain runs to 449 residues: Adenylosuccinate synthetase (449 aa).

GTP contacts are provided by residues 37–43 (GDEGKGK) and 65–67 (GHT). Catalysis depends on D38, which acts as the Proton acceptor. Mg(2+) is bound by residues D38 and G65. Residues 38 to 41 (DEGK), 63 to 66 (NAGH), T155, R169, N247, T262, and R326 each bind IMP. H66 (proton donor) is an active-site residue. 322-328 (VTTKRKR) provides a ligand contact to substrate. Residues R328, 354–356 (KLD), and 437–439 (GVG) contribute to the GTP site.

Belongs to the adenylosuccinate synthetase family. As to quaternary structure, homodimer. It depends on Mg(2+) as a cofactor.

The protein localises to the cytoplasm. The enzyme catalyses IMP + L-aspartate + GTP = N(6)-(1,2-dicarboxyethyl)-AMP + GDP + phosphate + 2 H(+). It participates in purine metabolism; AMP biosynthesis via de novo pathway; AMP from IMP: step 1/2. Its function is as follows. Plays an important role in the de novo pathway and in the salvage pathway of purine nucleotide biosynthesis. Catalyzes the first committed step in the biosynthesis of AMP from IMP. The chain is Adenylosuccinate synthetase from Drosophila willistoni (Fruit fly).